Here is a 408-residue protein sequence, read N- to C-terminus: 26S proteasome regulatory subunit 6B homolog (408 aa).

Ala-2 bears the N-acetylalanine mark. Ser-16 carries the post-translational modification Phosphoserine. Positions Glu-28 to Val-75 form a coiled coil. Gly-196–Thr-203 serves as a coordination point for ATP.

This sequence belongs to the AAA ATPase family. Component of the 19S regulatory particle (RP/PA700) base subcomplex of the 26S proteasome. The 26S proteasome is composed of a core protease (CP), known as the 20S proteasome, capped at one or both ends by the 19S regulatory particle (RP/PA700). The RP/PA700 complex is composed of at least 17 different subunits in two subcomplexes, the base and the lid, which form the portions proximal and distal to the 20S proteolytic core, respectively. In terms of tissue distribution, expressed in dark-grown etiolated seedlings, roots, leaves, stems and flowers.

The protein resides in the cytoplasm. It is found in the nucleus. Its function is as follows. The 26S proteasome is involved in the ATP-dependent degradation of ubiquitinated proteins. The regulatory (or ATPase) complex confers ATP dependency and substrate specificity to the 26S complex. In Arabidopsis thaliana (Mouse-ear cress), this protein is 26S proteasome regulatory subunit 6B homolog (RPT3).